We begin with the raw amino-acid sequence, 76 residues long: Probable insulin-like peptide alpha-type 3 (76 aa).

The signal sequence occupies residues 1 to 18 (MFVLLIILSIILAQVTDA). Cystine bridges form between cysteine 28-cysteine 58, cysteine 40-cysteine 71, and cysteine 46-cysteine 72.

It belongs to the insulin family.

It localises to the secreted. The polypeptide is Probable insulin-like peptide alpha-type 3 (ins-23) (Caenorhabditis elegans).